Consider the following 491-residue polypeptide: UDP-GalNAc:beta-1,3-N-acetylgalactosaminyltransferase 2 (491 aa).

The Cytoplasmic segment spans residues 1 to 2 (MR). The helical; Signal-anchor for type II membrane protein transmembrane segment at 3–23 (SAAAALSVCVLAVLLHWICWT) threads the bilayer. Residues 24 to 491 (DRSAELLGFR…NKCGDPCGCS (468 aa)) are Lumenal-facing. 2 N-linked (GlcNAc...) asparagine glycosylation sites follow: N167 and N230.

Belongs to the glycosyltransferase 31 family.

It is found in the golgi apparatus membrane. The protein resides in the endoplasmic reticulum. The enzyme catalyses 3-O-(N-acetyl-beta-D-glucosaminyl-(1-&gt;4)-alpha-D-mannosyl)-L-threonyl-[protein] + UDP-N-acetyl-alpha-D-galactosamine = 3-O-[beta-D-GalNAc-(1-&gt;3)-beta-D-GlcNAc-(1-&gt;4)-alpha-D-Man]-L-Thr-[protein] + UDP + H(+). The protein operates within protein modification; protein glycosylation. Its function is as follows. Beta-1,3-N-acetylgalactosaminyltransferase that synthesizes a unique carbohydrate structure, GalNAc-beta-1-3GlcNAc, on N- and O-glycans. Has no galactose nor galactosaminyl transferase activity toward any acceptor substrate. Involved in alpha-dystroglycan (dag1) glycosylation. The polypeptide is UDP-GalNAc:beta-1,3-N-acetylgalactosaminyltransferase 2 (b3galnt2) (Danio rerio (Zebrafish)).